Consider the following 228-residue polypeptide: Protein CWC15 homolog A (228 aa).

The interval 1–126 (MTTAARPTFE…DEDSDDDTAA (126 aa)) is disordered. A compositionally biased stretch (polar residues) spans 24–34 (SQLSKQYSSRD). The segment covering 52–84 (EEVRSRDFRRELEERERVVARDKNRDRPTREHT) has biased composition (basic and acidic residues). Acidic residues predominate over residues 102 to 124 (DADDPLTDEDGDEDSDEDSDDDT). Residues 121–165 (DDDTAALLAELEKIKKERAEEKDRKELEQKAEEERIRMENILSGN) adopt a coiled-coil conformation.

This sequence belongs to the CWC15 family. Identified in the spliceosome C complex. Component of the minor spliceosome, which splices U12-type introns.

The protein resides in the nucleus. Involved in pre-mRNA splicing as component of the spliceosome. The polypeptide is Protein CWC15 homolog A (cwc15-a) (Xenopus laevis (African clawed frog)).